Reading from the N-terminus, the 107-residue chain is Ig kappa chain V-VI region NQ6-8.3.1 (107 aa).

Residues 1 to 23 (QIVLTQSPAIMSASPGQKVTMTC) form a framework-1 region. Cysteine 23 and cysteine 87 are joined by a disulfide. The segment at 24 to 33 (SASSSVSYMH) is complementarity-determining-1. Positions 34–48 (WYQQKSGTSPKRWIY) are framework-2. A complementarity-determining-2 region spans residues 49–55 (DTSKLAS). The framework-3 stretch occupies residues 56–87 (GXPARFSGSGSATSYSLTITSMQAEDAATYYC). The complementarity-determining-3 stretch occupies residues 88–96 (QQWSSNPLT). The interval 97-106 (FGAGTKLELK) is framework-4.

Anti-2-phenyl oxazolone (PHOX) Antibody. The chain is Ig kappa chain V-VI region NQ6-8.3.1 from Mus musculus (Mouse).